A 600-amino-acid polypeptide reads, in one-letter code: Glutamine--fructose-6-phosphate aminotransferase [isomerizing] (600 aa).

Cys2 (nucleophile; for GATase activity) is an active-site residue. The Glutamine amidotransferase type-2 domain maps to 2–217 (CGIVGYIGQL…DKEMVIVTDK (216 aa)). SIS domains are found at residues 283–422 (ISNA…SRGK) and 452–590 (IARE…VDKP). Catalysis depends on Lys595, which acts as the For Fru-6P isomerization activity.

In terms of assembly, homodimer.

It localises to the cytoplasm. The enzyme catalyses D-fructose 6-phosphate + L-glutamine = D-glucosamine 6-phosphate + L-glutamate. Functionally, catalyzes the first step in hexosamine metabolism, converting fructose-6P into glucosamine-6P using glutamine as a nitrogen source. This chain is Glutamine--fructose-6-phosphate aminotransferase [isomerizing], found in Bacillus licheniformis (strain ATCC 14580 / DSM 13 / JCM 2505 / CCUG 7422 / NBRC 12200 / NCIMB 9375 / NCTC 10341 / NRRL NRS-1264 / Gibson 46).